Consider the following 112-residue polypeptide: WRMIWEHECCVIAVLTRLTEKKKVKCAQYWSETDNKSSKYGEITVKLRETSSCGDYVRRQFELTKNNMTREVVQFQFIAWPDHGIPVTTSSLFRFHKAVVFSQPHTAGPIVV.

One can recognise a Tyrosine-protein phosphatase domain in the interval tryptophan 1–valine 112. Aspartate 82 provides a ligand contact to substrate.

This sequence belongs to the protein-tyrosine phosphatase family.

The enzyme catalyses O-phospho-L-tyrosyl-[protein] + H2O = L-tyrosyl-[protein] + phosphate. This is Tyrosine-protein phosphatase 17 (STY-17) from Styela plicata (Wrinkled sea squirt).